Here is an 84-residue protein sequence, read N- to C-terminus: Large ribosomal subunit protein bL27 (84 aa).

The segment at 1–21 (MAHKKGQGSTRNGRDSHSKRL) is disordered. The segment covering 12-21 (NGRDSHSKRL) has biased composition (basic and acidic residues).

The protein belongs to the bacterial ribosomal protein bL27 family.

This Methylacidiphilum infernorum (isolate V4) (Methylokorus infernorum (strain V4)) protein is Large ribosomal subunit protein bL27.